Reading from the N-terminus, the 184-residue chain is Thiosulfate dehydrogenase [quinone] large subunit (184 aa).

A run of 4 helical transmembrane segments spans residues Leu21–Arg38, Phe86–Leu106, Leu109–Ser129, and Ile137–Trp157.

Heterodimer of a large and a small subunit in a 2:2 stoichiometry. TQO may associate with the terminal oxidase formed by doxBCE.

The protein localises to the cell membrane. It catalyses the reaction 6-decylubiquinone + 2 thiosulfate = 6-decylubiquinol + tetrathionate. With respect to regulation, inhibited by sulfite, metabisulfite and dithonite. Functionally, TQO plays a role in sulfur oxidation and is proposed to couple sulfur oxidation to dioxygen reduction; caldariellaquinone or sulfolobus quinone seem to serve to transfer electrons to the electron transport chain terminal oxidase formed by DoxBCE. This chain is Thiosulfate dehydrogenase [quinone] large subunit (doxD), found in Acidianus ambivalens (Desulfurolobus ambivalens).